A 406-amino-acid chain; its full sequence is Glycosylated lysosomal membrane protein (406 aa).

The first 35 residues, 1–35 (MRGSVECTWGWGHCAPSPLLLWTLLLFAAPFGLLG), serve as a signal peptide directing secretion. Topologically, residues 36–372 (EKTRQVSLEV…VDGLSPLVLG (337 aa)) are lumenal. N-linked (GlcNAc...) asparagine glycans are attached at residues asparagine 65, asparagine 134, asparagine 159, asparagine 187, and asparagine 230. The chain crosses the membrane as a helical span at residues 373–393 (IMAVALGAPGLMLLGGGLVLL). The Cytoplasmic portion of the chain corresponds to 394 to 406 (LHHKKYSEYQSIN). Residues 402–406 (YQSIN) carry the Lysosomal targeting motif motif.

It belongs to the GLMP family. As to quaternary structure, interacts (via lumenal domain) with lysosomal protein MFSD1; the interaction starts while both proteins are still in the endoplasmic reticulum and is required for stabilization of MFSD1 in lysosomes but has no direct effect on its targeting to lysosomes or transporter activity. In terms of processing, highly N-glycosylated. N-glycosylation is essential for GLMP stability and for MFSD1 lysosomal localization.

It is found in the lysosome membrane. Functionally, required to protect lysosomal transporter MFSD1 from lysosomal proteolysis and for MFSD1 lysosomal localization. This chain is Glycosylated lysosomal membrane protein, found in Homo sapiens (Human).